The primary structure comprises 37 residues: Large ribosomal subunit protein bL36 (37 aa).

Belongs to the bacterial ribosomal protein bL36 family.

The sequence is that of Large ribosomal subunit protein bL36 from Nitratidesulfovibrio vulgaris (strain DSM 19637 / Miyazaki F) (Desulfovibrio vulgaris).